The sequence spans 380 residues: Reducing-end xylose-releasing exo-oligoxylanase Rex8A (380 aa).

Catalysis depends on E70, which acts as the Proton donor. D265 (proton acceptor) is an active-site residue.

The protein belongs to the glycosyl hydrolase 8 (cellulase D) family.

The enzyme catalyses Hydrolysis of (1-&gt;4)-beta-D-xylose residues from the reducing end of oligosaccharides.. Its pathway is glycan degradation; xylan degradation. Involved in depolymerization of xylan, a major component of the lignocellulosic substrates. Acts as an exo-oligoxylanase that efficiently hydrolyzes xylooligosaccharides, releasing xylose from their reducing ends. Hydrolyzes xylooligomers of 3 to 6 xylose units to xylose and xylobiose. Besides linear xylooligosaccharides, also hydrolyzes branched xylooligomers, such as xylooligomers decorated with 4-O-methyl-D-glucuronic acid moieties. Its proposed role is the degradation of xylooligomers produced by the activity of extracellular xylanases once they have been transported inside cells. Shows minor activity on polymeric xylan (glucuronoxylan from beechwood). Is not active on cellooligosaccharides or cellulosic substrates, or on other polysaccharides such as pectin, polygalacturonic acid, laminarin, or lichenan. This is Reducing-end xylose-releasing exo-oligoxylanase Rex8A from Paenibacillus barcinonensis.